The chain runs to 138 residues: HTH-type transcriptional regulator CymR (138 aa).

Positions 2–125 constitute an HTH rrf2-type domain; the sequence is KISTKGRYGL…DSTTLEDLAS (124 aa). A DNA-binding region (H-T-H motif) is located at residues 28-51; sequence LKSIAQTNNLSEHYLEQLVSPLRN.

In terms of assembly, homodimer. Forms homotetramers at higher concentrations of protein. Forms CymR(2):CysK(2) or CymR(4):CysK(4) complexes in the absence of O-acetylserine.

In terms of biological role, master repressor of cysteine metabolism in B.subtilis. Controls the expression of genes involved either in cysteine synthesis from sulfide (cysK), sulfonates (ssu), or methionine (mccAB) or in cystine uptake (tcyP). Activity of CymR is positively regulated by CysK in response to cysteine availability. When cysteine is present, the pool of O-acetylserine (OAS) is low, which leads to the formation of a CymR-CysK complex and transcriptional repression of the CymR regulon occurs. In the absence of cysteine, the OAS pool is high and the CymR-CysK complex is mostly dissociated, leading to a faster dissociation of CymR from its DNA targets and the lifting of CymR-dependent repression. The sequence is that of HTH-type transcriptional regulator CymR (cymR) from Bacillus subtilis (strain 168).